The chain runs to 926 residues: LPS-assembly protein LptD (926 aa).

The signal sequence occupies residues 1-22 (MALKSPAFRKKFPLLVTGSLLA). The interval 58–99 (VDLPPRPVHDTTSVSSNGTVTSQSTSSGEQVAGTQLVTEAKG) is disordered. Over residues 68–85 (TTSVSSNGTVTSQSTSSG) the composition is skewed to low complexity.

The protein belongs to the LptD family. As to quaternary structure, component of the lipopolysaccharide transport and assembly complex. Interacts with LptE and LptA.

It is found in the cell outer membrane. Together with LptE, is involved in the assembly of lipopolysaccharide (LPS) at the surface of the outer membrane. This is LPS-assembly protein LptD from Pseudomonas savastanoi pv. phaseolicola (strain 1448A / Race 6) (Pseudomonas syringae pv. phaseolicola (strain 1448A / Race 6)).